The following is a 226-amino-acid chain: 2,3-bisphosphoglycerate-dependent phosphoglycerate mutase (226 aa).

Substrate is bound by residues arginine 8–asparagine 15, threonine 21–glycine 22, arginine 58, glutamate 112–tyrosine 115, lysine 123, arginine 139–arginine 140, and glycine 183–asparagine 184. Residue histidine 9 is the Tele-phosphohistidine intermediate of the active site. Residue glutamate 112 is the Proton donor/acceptor of the active site.

The protein belongs to the phosphoglycerate mutase family. BPG-dependent PGAM subfamily.

The catalysed reaction is (2R)-2-phosphoglycerate = (2R)-3-phosphoglycerate. It functions in the pathway carbohydrate degradation; glycolysis; pyruvate from D-glyceraldehyde 3-phosphate: step 3/5. In terms of biological role, catalyzes the interconversion of 2-phosphoglycerate and 3-phosphoglycerate. The protein is 2,3-bisphosphoglycerate-dependent phosphoglycerate mutase of Protochlamydia amoebophila (strain UWE25).